We begin with the raw amino-acid sequence, 104 residues long: MSLRLYDSYGQDAVISDLVSWGGLMGPFHDYFERGNLDIFSGLGSCLSGPVCAMNLTSDGSGDHHGWYCNYVEVTMSESRRRSCSQEKFEVEQWLARDASPYEL.

Residues 1 to 104 enclose the PLAT domain; it reads MSLRLYDSYG…LARDASPYEL (104 aa).

The chain is PLAT domain-containing protein 3 from Arabidopsis thaliana (Mouse-ear cress).